The chain runs to 206 residues: Guanylyl cyclase inhibitory protein (206 aa).

Gly2 is lipidated: N-myristoyl glycine. 4 consecutive EF-hand domains span residues 31–49, 51–86, 87–122, and 135–170; these read SGLITLHEFRQFFSDVTVG, NSSEYAEQIFRALDNNGDGIVDFREYVTAISMLAHG, TPEDKLKWSFKLYDKDGDGAITRSEMLEIMRAVYKM, and TAEECTNRIFVRLDKDQNAIISLQEFVDGSLGDEWV. The Ca(2+) site is built by Asp64, Asn66, Asp68, Glu75, Asp100, Asp102, Asp104, and Glu111.

As to expression, retina; inner segments, somata and synaptic terminals of cone receptors.

Does not stimulate guanylyl cyclase (GC) when free calcium ion concentration is low, but inhibits GC when free calcium ions concentration is elevated. This chain is Guanylyl cyclase inhibitory protein (GCIP), found in Lithobates pipiens (Northern leopard frog).